A 294-amino-acid polypeptide reads, in one-letter code: UPF0761 membrane protein YPTS_0028 (294 aa).

Helical transmembrane passes span 44 to 64 (LLSL…FPMF), 67 to 87 (ISIK…GDII), 108 to 128 (GLIV…NIIW), 136 to 156 (LVFS…LVGA), 185 to 205 (VFPL…VPTV), 212 to 232 (ALIG…GFAM), and 246 to 266 (VLAV…IVLL).

It belongs to the UPF0761 family.

The protein localises to the cell inner membrane. This chain is UPF0761 membrane protein YPTS_0028, found in Yersinia pseudotuberculosis serotype IB (strain PB1/+).